The sequence spans 852 residues: Thrombospondin type-1 domain-containing protein 1 (852 aa).

The signal sequence occupies residues 1 to 24 (MKPMLKDFSNLLLVVLCDYVLGEA). The Extracellular portion of the chain corresponds to 25–413 (EYLLLREPGH…QPQGPVKSNN (389 aa)). N39, N53, N58, N69, N80, N135, and N304 each carry an N-linked (GlcNAc...) asparagine glycan. In terms of domain architecture, TSP type-1 spans 340–393 (TETWGLWQPWSQCSATCGDGVRERRRVCLTSFPSSPVCPGMSLEASLCSLEECA). 3 disulfides stabilise this stretch: C352/C387, C356/C392, and C367/C377. A helical transmembrane segment spans residues 414 to 434 (IVTVTGISLCLFIIIATVLIT). Over 435–852 (LWRRFGRPAK…STLSVEKLVI (418 aa)) the chain is Cytoplasmic. Disordered regions lie at residues 444 to 517 (KCST…ESFQ) and 624 to 799 (LIRK…RKDK). Residue S463 is modified to Phosphoserine. Over residues 645–654 (ARNAHFRRTA) the composition is skewed to basic residues. The span at 655 to 669 (SFHEARQARPFRERS) shows a compositional bias: basic and acidic residues. The segment covering 670-685 (MSTLTPRQAPAYSSRT) has biased composition (polar residues). Residues 686–696 (RTCEQAEDRFR) are compositionally biased toward basic and acidic residues. Composition is skewed to polar residues over residues 766-778 (SHKSVSRKQSSPI) and 785-794 (QRVSSLSPSQ).

Part of a complex composed of THSD1, PTK2/FAK1, TLN1 and VCL. Interacts with TLN1.

Its subcellular location is the endosome membrane. The protein resides in the cell junction. It is found in the focal adhesion. The protein localises to the membrane. It localises to the secreted. In terms of biological role, is a positive regulator of nascent focal adhesion assembly, involved in the modulation of endothelial cell attachment to the extracellular matrix. In Homo sapiens (Human), this protein is Thrombospondin type-1 domain-containing protein 1 (THSD1).